The following is a 115-amino-acid chain: Large ribosomal subunit protein bL19 (115 aa).

The protein belongs to the bacterial ribosomal protein bL19 family.

Its function is as follows. This protein is located at the 30S-50S ribosomal subunit interface and may play a role in the structure and function of the aminoacyl-tRNA binding site. The polypeptide is Large ribosomal subunit protein bL19 (Thermosipho africanus (strain TCF52B)).